A 135-amino-acid polypeptide reads, in one-letter code: UPF0299 membrane protein Spro_1570 (135 aa).

The next 4 membrane-spanning stretches (helical) occupy residues 4-24 (LFTLCWKYLRAIVLIYLCLFA), 30-50 (ALLPIAIPGSIIGMLLLFALL), 63-83 (GCHLLIRYMVLLFVPIGVGVM), and 93-113 (LGPLVVSCIISTLMVLVVVGY).

It belongs to the UPF0299 family.

Its subcellular location is the cell inner membrane. The chain is UPF0299 membrane protein Spro_1570 from Serratia proteamaculans (strain 568).